The sequence spans 230 residues: Secretory carrier-associated membrane protein 4 (230 aa).

The Cytoplasmic portion of the chain corresponds to 1–39 (MAGKENNFPPLPPFLPLKPCFYQDFSDEIPVEHQVLVKR). The next 4 helical transmembrane spans lie at 40–60 (IYRL…ACLA), 61–81 (WWIA…LVLF), 106–126 (MTFF…AIGF), and 149–169 (VVML…AVTI). Topologically, residues 170–230 (VKVHRIYRGA…SYSSSGGHWP (61 aa)) are cytoplasmic. Threonine 194 carries the phosphothreonine modification.

The protein belongs to the SCAMP family.

The protein localises to the membrane. Functionally, probably involved in membrane protein trafficking. The chain is Secretory carrier-associated membrane protein 4 (Scamp4) from Mus musculus (Mouse).